The chain runs to 391 residues: MTLLQLGVCAGSIYTTFLIWGLLQERLTKTPYTAPATLLHPNPQPDYFRSPLFLNTVQALFSSVVACMYLLVRNRGSNKRVTQILGLHTLTPDGIAEKTQNGRASATNGKAAPTRSRWISPLLSRYILIAALQSTASQLGFLSLRYISYPTLTLAKSCKLVPVLVMNVVLYRRKFASYKYAVVGLVTLGIWLFMAFAPSKPGKKAKAPESSSLIGLVLCLLNLVLDGATNSTQDQVFSMFGRQTVSAGQMMLVMNAISAFLMALTLTLPIPLLSTPGQPTQLSTAIAFTQKHPEVWRDIIAYALAGAVGQVSIFETLERFGSLTLVSITVTRKLFTMLLSVVVYKHELSKLQWLGVAVVFAGIGIEAREKRREGLANKVIHDEKRALAKDA.

Helical transmembrane passes span 3–23 (LLQL…WGLL), 52–72 (LFLN…YLLV), 126–147 (YILI…LRYI), 178–198 (YKYA…AFAP), and 207–227 (APES…VLDG). N-linked (GlcNAc...) asparagine glycosylation is present at N230. 4 helical membrane passes run 250-270 (MMLV…TLPI), 298-318 (DIIA…ETLE), 323-343 (LTLV…SVVV), and 347-367 (ELSK…GIEA).

This sequence belongs to the nucleotide-sugar transporter family. SLC35B subfamily.

Its subcellular location is the endoplasmic reticulum membrane. Its function is as follows. May be involved in specific transport of UDP-Gal from the cytosol to the Golgi lumen. Involved in the maintenance of optimal conditions for the folding of secretory pathway proteins in the endoplasmic reticulum. This is UDP-galactose transporter homolog 1 (HUT1) from Mycosarcoma maydis (Corn smut fungus).